Here is a 229-residue protein sequence, read N- to C-terminus: UPF0758 protein Cbei_0490 (229 aa).

One can recognise an MPN domain in the interval Lys107 to Ile229. Positions 178, 180, and 191 each coordinate Zn(2+). The JAMM motif signature appears at His178 to Asp191.

This sequence belongs to the UPF0758 family.

This is UPF0758 protein Cbei_0490 from Clostridium beijerinckii (strain ATCC 51743 / NCIMB 8052) (Clostridium acetobutylicum).